Reading from the N-terminus, the 591-residue chain is Probable metalloprotease ARX1 (591 aa).

This sequence belongs to the peptidase M24 family. Component of the nucleoplasmic and cytoplasmic pre-60S ribosomal particles.

It is found in the cytoplasm. Its subcellular location is the nucleus. Functionally, probable metalloprotease involved in proper assembly of pre-ribosomal particles during the biogenesis of the 60S ribosomal subunit. Accompanies the pre-60S particles to the cytoplasm. In Eremothecium gossypii (strain ATCC 10895 / CBS 109.51 / FGSC 9923 / NRRL Y-1056) (Yeast), this protein is Probable metalloprotease ARX1 (ARX1).